We begin with the raw amino-acid sequence, 372 residues long: Alanine racemase (372 aa).

K41 (proton acceptor; specific for D-alanine) is an active-site residue. Residue K41 is modified to N6-(pyridoxal phosphate)lysine. R139 serves as a coordination point for substrate. Catalysis depends on Y268, which acts as the Proton acceptor; specific for L-alanine. M316 provides a ligand contact to substrate.

Belongs to the alanine racemase family. It depends on pyridoxal 5'-phosphate as a cofactor.

The enzyme catalyses L-alanine = D-alanine. It participates in amino-acid biosynthesis; D-alanine biosynthesis; D-alanine from L-alanine: step 1/1. Catalyzes the interconversion of L-alanine and D-alanine. May also act on other amino acids. The chain is Alanine racemase (alr) from Borreliella burgdorferi (strain ATCC 35210 / DSM 4680 / CIP 102532 / B31) (Borrelia burgdorferi).